Here is a 134-residue protein sequence, read N- to C-terminus: Complexin-1 (134 aa).

The segment at 1 to 112 (MEFVMKQALG…PGCGDAAEEE (112 aa)) is disordered. The segment covering 15–81 (DMGKMLGGDE…IKKKEEREAE (67 aa)) has biased composition (basic and acidic residues). The stretch at 29-69 (DAAKKEEERQEALRQEEEERKAKYAKMEAEREAVRQGIRDK) forms a coiled coil. Residues 48-70 (RKAKYAKMEAEREAVRQGIRDKY) form an interaction with the SNARE complex region.

It belongs to the complexin/synaphin family. As to quaternary structure, binds to the SNARE core complex containing SNAP25, VAMP2 and STX1A.

Its subcellular location is the cytoplasm. The protein resides in the cytosol. It localises to the perikaryon. The protein localises to the presynapse. Positively regulates a late step in synaptic vesicle exocytosis. Organizes the SNAREs into a cross-linked zigzag topology that, when interposed between the vesicle and plasma membranes, is incompatible with fusion, thereby preventing SNAREs from releasing neurotransmitters until an action potential arrives at the synapse. Also involved in glucose-induced secretion of insulin by pancreatic beta-cells. The protein is Complexin-1 (CPLX1) of Bos taurus (Bovine).